The following is a 355-amino-acid chain: Tryptophan--tRNA ligase (355 aa).

ATP is bound by residues 13 to 15 (QPT) and 21 to 22 (GN). The 'HIGH' region motif lies at 14–22 (PTGNLHLGN). Residue D137 participates in L-tryptophan binding. ATP contacts are provided by residues 149–151 (GED), I208, and 217–221 (KMSKS). The 'KMSKS' region motif lies at 217 to 221 (KMSKS).

The protein belongs to the class-I aminoacyl-tRNA synthetase family. As to quaternary structure, homodimer.

It localises to the cytoplasm. It catalyses the reaction tRNA(Trp) + L-tryptophan + ATP = L-tryptophyl-tRNA(Trp) + AMP + diphosphate + H(+). In terms of biological role, catalyzes the attachment of tryptophan to tRNA(Trp). This Brucella melitensis biotype 1 (strain ATCC 23456 / CCUG 17765 / NCTC 10094 / 16M) protein is Tryptophan--tRNA ligase.